The chain runs to 214 residues: Vascular endothelial growth factor A (214 aa).

Positions 1 to 26 (MNFLLSWVHWSLALLLYLHHAKWSQA) are cleaved as a signal peptide. 3 disulfide bridges follow: Cys-51-Cys-93, Cys-82-Cys-127, and Cys-86-Cys-129. The N-linked (GlcNAc...) asparagine glycan is linked to Asn-100. The segment covering 131–142 (PKKDRARQEKKS) has biased composition (basic and acidic residues). The tract at residues 131 to 162 (PKKDRARQEKKSIRGKGKGQKRKRKKSRYKPW) is disordered. Basic residues predominate over residues 143 to 159 (IRGKGKGQKRKRKKSRY).

It belongs to the PDGF/VEGF growth factor family. In terms of assembly, homodimer; disulfide-linked. Also found as heterodimer with PGF. Interacts with NRP1. Interacts with BSG. Interacts with CD82; this interaction inhibits VEGFA-mediated signaling pathway.

It localises to the secreted. In terms of biological role, growth factor active in angiogenesis, vasculogenesis and endothelial cell growth. Induces endothelial cell proliferation, promotes cell migration, inhibits apoptosis and induces permeabilization of blood vessels. Binds to the FLT1/VEGFR1 and KDR/VEGFR2 receptors, heparan sulfate and heparin. Binding to NRP1 receptor initiates a signaling pathway needed for motor neuron axon guidance and cell body migration, including for the caudal migration of facial motor neurons from rhombomere 4 to rhombomere 6 during embryonic development. Also binds the DEAR/FBXW7-AS1 receptor. This is Vascular endothelial growth factor A (VEGFA) from Canis lupus familiaris (Dog).